Consider the following 692-residue polypeptide: MAREFSLAKTRNIGIMAHVDAGKTTTTERILYYTGKIHKIGETHEGASQMDWMEQEQERGITITSAATTAQWDGHRVNIIDTPGHVDFTIEVQRSLRVLDGAVTVLDSQSGVEPQTETVWRQATEYGVPRIVFANKMDKIGADFLYSVQTLHDRLQANAHPIQLPIGAEDDFRGIIDLIKMKAEIYTNDLGTDILEEDIPEEYLEQAQEYREKLIEAVAETDEDLMMKYLEGEEITNDELIAGIRKATINVEFFPVLCGSAFKNKGVQLMLDAVIAYLPSPLDIPAIKGVNPDTDAEEERPASDEEPFAALAFKIMTDPFVGRLTFFRVYSGVLNSGSYVMNTSKGKRERIGRILQMHANSRQEIETVYAGDIAAAVGLKDTTTGDSLTDEKAKVILESIEVPEPVIQLMVEPKSKADQDKMGVALQKLAEEDPTFRVETNVETGETVIAGMGELHLDVLVDRMKREFKVEANVGAPQVSYRETFRASTQARGFFKRQSGGKGQFGDVWIEFTPNEEGKGFEFENAIVGGVVPREFIPAVEKGLIESMANGVLAGYPMVDVKAKLYDGSYHDVDSSETAFKIAASLALKEAAKSAQPAILEPMMLVTITAPEDNLGDVMGHVTARRGRVDGMEAHGNSQIVRAYVPLAEMFGYATVLRSATQGRGTFMMVFDHYEDVPKSVQEEIIKKNKGE.

In terms of domain architecture, tr-type G spans 8–282 (AKTRNIGIMA…AVIAYLPSPL (275 aa)). Residues 17 to 24 (AHVDAGKT), 81 to 85 (DTPGH), and 135 to 138 (NKMD) each bind GTP.

The protein belongs to the TRAFAC class translation factor GTPase superfamily. Classic translation factor GTPase family. EF-G/EF-2 subfamily.

It localises to the cytoplasm. Catalyzes the GTP-dependent ribosomal translocation step during translation elongation. During this step, the ribosome changes from the pre-translocational (PRE) to the post-translocational (POST) state as the newly formed A-site-bound peptidyl-tRNA and P-site-bound deacylated tRNA move to the P and E sites, respectively. Catalyzes the coordinated movement of the two tRNA molecules, the mRNA and conformational changes in the ribosome. In Streptococcus pyogenes serotype M1, this protein is Elongation factor G (fus).